The primary structure comprises 433 residues: AP-2 complex subunit mu (433 aa).

The region spanning 168-432 (RNELFLDVLE…IGRSGIYETR (265 aa)) is the MHD domain. The a 1,2-diacyl-sn-glycero-3-phospho-(1D-myo-inositol-3,4,5-trisphosphate) site is built by Lys-339, Lys-343, and Lys-352.

This sequence belongs to the adaptor complexes medium subunit family. In terms of assembly, adaptor protein complex 2 (AP-2) is a heterotetramer composed of two large adaptins (alpha-type subunit and beta-type subunit), a medium adaptin (mu-type subunit) and a small adaptin (sigma-type subunit).

It localises to the cell membrane. Its subcellular location is the membrane. The protein localises to the coated pit. Functionally, component of the adaptor complexes which link clathrin to receptors in coated vesicles. Clathrin-associated protein complexes are believed to interact with the cytoplasmic tails of membrane proteins, leading to their selection and concentration. AP50 is a subunit of the plasma membrane adaptor. The complex binds polyphosphoinositide-containing lipids. This is AP-2 complex subunit mu (AP2M1) from Gallus gallus (Chicken).